The sequence spans 110 residues: Body wall hemoglobin (110 aa).

The Globin domain maps to 2–110 (VNWAAVVDAF…GAVDAIISHF (109 aa)). Residue His70 participates in heme binding.

This sequence belongs to the globin family. In terms of assembly, homotetramer.

The polypeptide is Body wall hemoglobin (Cerebratulus lacteus (Milky ribbon worm)).